Here is a 145-residue protein sequence, read N- to C-terminus: Large ribosomal subunit protein uL15 (145 aa).

Basic and acidic residues predominate over residues 1-18 (MKLHELKYTEGSKKDVTR). Residues 1–51 (MKLHELKYTEGSKKDVTRVGRGMASGKGKTSTRGHKGQNSRSGGGVRVGFE) are disordered. Over residues 42-51 (SGGGVRVGFE) the composition is skewed to gly residues.

The protein belongs to the universal ribosomal protein uL15 family. As to quaternary structure, part of the 50S ribosomal subunit.

Functionally, binds to the 23S rRNA. The chain is Large ribosomal subunit protein uL15 from Mesoplasma florum (strain ATCC 33453 / NBRC 100688 / NCTC 11704 / L1) (Acholeplasma florum).